The chain runs to 931 residues: Bifunctional glutamine synthetase adenylyltransferase/adenylyl-removing enzyme (931 aa).

The tract at residues 1–434 is adenylyl removase; sequence MTLAPADLPA…STEFAALLAP (434 aa). An adenylyl transferase region spans residues 441 to 931; the sequence is PDALANYWRS…ACIAAELPFA (491 aa).

This sequence belongs to the GlnE family. It depends on Mg(2+) as a cofactor.

The catalysed reaction is [glutamine synthetase]-O(4)-(5'-adenylyl)-L-tyrosine + phosphate = [glutamine synthetase]-L-tyrosine + ADP. It carries out the reaction [glutamine synthetase]-L-tyrosine + ATP = [glutamine synthetase]-O(4)-(5'-adenylyl)-L-tyrosine + diphosphate. Its function is as follows. Involved in the regulation of glutamine synthetase GlnA, a key enzyme in the process to assimilate ammonia. When cellular nitrogen levels are high, the C-terminal adenylyl transferase (AT) inactivates GlnA by covalent transfer of an adenylyl group from ATP to specific tyrosine residue of GlnA, thus reducing its activity. Conversely, when nitrogen levels are low, the N-terminal adenylyl removase (AR) activates GlnA by removing the adenylyl group by phosphorolysis, increasing its activity. The regulatory region of GlnE binds the signal transduction protein PII (GlnB) which indicates the nitrogen status of the cell. This chain is Bifunctional glutamine synthetase adenylyltransferase/adenylyl-removing enzyme, found in Stenotrophomonas maltophilia (strain R551-3).